The sequence spans 263 residues: Renal glandular kallikrein (263 aa).

Residues 1–18 (MWFLILFLALFLGGIDAA) form the signal peptide. Residues 19–24 (PPVQSR) constitute a propeptide, activation peptide. The region spanning 25 to 260 (IIGGFNCEKN…YRSWIKDVMA (236 aa)) is the Peptidase S1 domain. 5 cysteine pairs are disulfide-bonded: C31/C175, C50/C66, C153/C221, C186/C200, and C211/C236. The active-site Charge relay system is H65. N-linked (GlcNAc...) asparagine glycosylation is present at N102. The Charge relay system role is filled by D121. The Charge relay system role is filled by S215.

Belongs to the peptidase S1 family. Kallikrein subfamily.

The catalysed reaction is Preferential cleavage of Arg-|-Xaa bonds in small molecule substrates. Highly selective action to release kallidin (lysyl-bradykinin) from kininogen involves hydrolysis of Met-|-Xaa or Leu-|-Xaa.. Functionally, glandular kallikreins cleave Met-Lys and Arg-Ser bonds in kininogen to release Lys-bradykinin. The sequence is that of Renal glandular kallikrein from Mastomys natalensis (African soft-furred rat).